The chain runs to 122 residues: Large ribosomal subunit protein uL14c (122 aa).

Belongs to the universal ribosomal protein uL14 family. As to quaternary structure, part of the 50S ribosomal subunit.

It localises to the plastid. It is found in the chloroplast. Binds to 23S rRNA. This chain is Large ribosomal subunit protein uL14c, found in Capsella bursa-pastoris (Shepherd's purse).